The following is a 578-amino-acid chain: CTP synthase 2 (578 aa).

One can recognise a Glutamine amidotransferase type-1 domain in the interval 300–553 (SIALVGKYTK…MLAASGKLNT (254 aa)). Residues Cys399, His526, and Glu528 each act as for GATase activity in the active site.

Belongs to the CTP synthase family.

The catalysed reaction is UTP + L-glutamine + ATP + H2O = CTP + L-glutamate + ADP + phosphate + 2 H(+). It functions in the pathway pyrimidine metabolism; CTP biosynthesis via de novo pathway; CTP from UDP: step 2/2. Its function is as follows. Catalyzes the ATP-dependent amination of UTP to CTP with either L-glutamine or ammonia as the source of nitrogen. Constitutes the rate-limiting enzyme in the synthesis of cytosine nucleotides. This is CTP synthase 2 (ctps2) from Xenopus laevis (African clawed frog).